We begin with the raw amino-acid sequence, 419 residues long: Creatine kinase S-type, mitochondrial (419 aa).

Residues 1–39 (MASAFSKLLTGRNASLLFTTLGTSALTTGYLLNRQKVSA) constitute a mitochondrion transit peptide. The segment at 40 to 64 (DAREQHKLFPPSADYPDLRKHNNCM) is cardiolipin-binding. The 87-residue stretch at 46 to 132 (KLFPPSADYP…FDPVIKLRHN (87 aa)) folds into the Phosphagen kinase N-terminal domain. The 243-residue stretch at 159–401 (YVLSSRVRTG…NYLVDCEKKL (243 aa)) folds into the Phosphagen kinase C-terminal domain. ATP-binding positions include 162–166 (SSRVR) and His-225. Tyr-255 carries the phosphotyrosine modification. ATP contacts are provided by residues Arg-270, Arg-326, 354–359 (RGTGGV), and Asp-369. The residue at position 356 (Thr-356) is a Phosphothreonine.

The protein belongs to the ATP:guanido phosphotransferase family. In terms of assembly, exists as an octamer composed of four CKMT2 homodimers.

Its subcellular location is the mitochondrion inner membrane. It catalyses the reaction creatine + ATP = N-phosphocreatine + ADP + H(+). Its function is as follows. Reversibly catalyzes the transfer of phosphate between ATP and various phosphogens (e.g. creatine phosphate). Creatine kinase isoenzymes play a central role in energy transduction in tissues with large, fluctuating energy demands, such as skeletal muscle, heart, brain and spermatozoa. This chain is Creatine kinase S-type, mitochondrial (Ckmt2), found in Mus musculus (Mouse).